We begin with the raw amino-acid sequence, 139 residues long: Gastrula zinc finger protein XlCGF67.1 (139 aa).

5 C2H2-type zinc fingers span residues 6-28, 33-55, 61-83, 89-111, and 117-139; these read VSCP…KKVH, YSCS…LRTH, YSCS…KRIH, FSCQ…QKIH, and FSCS…SRIH.

This sequence belongs to the krueppel C2H2-type zinc-finger protein family.

Its subcellular location is the nucleus. In terms of biological role, may be involved in transcriptional regulation. The sequence is that of Gastrula zinc finger protein XlCGF67.1 from Xenopus laevis (African clawed frog).